Reading from the N-terminus, the 381-residue chain is Lipid-A-disaccharide synthase (381 aa).

The protein belongs to the LpxB family.

It catalyses the reaction a lipid X + a UDP-2-N,3-O-bis[(3R)-3-hydroxyacyl]-alpha-D-glucosamine = a lipid A disaccharide + UDP + H(+). The protein operates within bacterial outer membrane biogenesis; LPS lipid A biosynthesis. Condensation of UDP-2,3-diacylglucosamine and 2,3-diacylglucosamine-1-phosphate to form lipid A disaccharide, a precursor of lipid A, a phosphorylated glycolipid that anchors the lipopolysaccharide to the outer membrane of the cell. The polypeptide is Lipid-A-disaccharide synthase (Solibacter usitatus (strain Ellin6076)).